The following is a 1078-amino-acid chain: DNA-directed RNA polymerase subunit beta (1078 aa).

It belongs to the RNA polymerase beta chain family. As to quaternary structure, the minimal PEP RNA polymerase found in etioplasts (PEP-B) is composed of four subunits: alpha, beta, beta', and beta''. Following differentiation into chloroplasts the PEP-A RNA polymerase in this organism has been shown to be composed of at least 13 subunits, including the PEP-B subunits. When a (nuclear-encoded) sigma factor is associated with the core the holoenzyme is formed, which can initiate transcription.

It localises to the plastid. Its subcellular location is the chloroplast. The enzyme catalyses RNA(n) + a ribonucleoside 5'-triphosphate = RNA(n+1) + diphosphate. In terms of biological role, DNA-dependent RNA polymerase catalyzes the transcription of DNA into RNA using the four ribonucleoside triphosphates as substrates. The protein is DNA-directed RNA polymerase subunit beta (rpoB) of Sinapis alba (White mustard).